Reading from the N-terminus, the 354-residue chain is Dihydroorotate dehydrogenase (quinone) (354 aa).

FMN-binding positions include alanine 61–lysine 65 and alanine 85. Lysine 65 is a substrate binding site. Asparagine 110–phenylalanine 114 is a binding site for substrate. FMN is bound by residues asparagine 139 and asparagine 170. Asparagine 170 is a substrate binding site. The active-site Nucleophile is the serine 173. Asparagine 175 is a substrate binding site. FMN is bound by residues lysine 211 and threonine 239. Asparagine 240–threonine 241 provides a ligand contact to substrate. Residues glycine 261, glycine 290, and tyrosine 311–threonine 312 contribute to the FMN site.

This sequence belongs to the dihydroorotate dehydrogenase family. Type 2 subfamily. In terms of assembly, monomer. FMN serves as cofactor.

It is found in the cell membrane. It catalyses the reaction (S)-dihydroorotate + a quinone = orotate + a quinol. It participates in pyrimidine metabolism; UMP biosynthesis via de novo pathway; orotate from (S)-dihydroorotate (quinone route): step 1/1. In terms of biological role, catalyzes the conversion of dihydroorotate to orotate with quinone as electron acceptor. This chain is Dihydroorotate dehydrogenase (quinone), found in Cereibacter sphaeroides (strain KD131 / KCTC 12085) (Rhodobacter sphaeroides).